The chain runs to 122 residues: Large ribosomal subunit protein uL14 (122 aa).

The protein belongs to the universal ribosomal protein uL14 family. In terms of assembly, part of the 50S ribosomal subunit. Forms a cluster with proteins L3 and L19. In the 70S ribosome, L14 and L19 interact and together make contacts with the 16S rRNA in bridges B5 and B8.

Functionally, binds to 23S rRNA. Forms part of two intersubunit bridges in the 70S ribosome. This is Large ribosomal subunit protein uL14 from Pseudomonas aeruginosa (strain LESB58).